Consider the following 724-residue polypeptide: NAD(+) hydrolase SARM1 (724 aa).

Residues 1-27 (MVLTLLFSAYKLCRFFIMSGPRPGADR) constitute a mitochondrion transit peptide. An ARM 1 repeat occupies 60–100 (EVQGALERSLPELQQALSELKQASAAQAVGAGLAEVFQLVE). NAD(+)-binding positions include tryptophan 103, arginine 110, 149–157 (EQILVAENR), and 190–193 (HMFK). ARM repeat units follow at residues 114–153 (QGLCDAIRLDGGLDLLLRLLQAPELETRVQAARLLEQILV), 155–193 (ENRDRVARIGLGVILNLSKEREPVELARSVAGILEHMFK), 196–235 (EETCQRLVAAGGLDAVLYWCRRTDPALLRHCALALANCAL), 237–280 (GGQT…LATN), 281–314 (KEVEREVEHSGTLALVEPLVASLDPGRFARCLVD), 315–354 (ASDTSQGRGPDDLQSLVLLLDSSRLEAQCIGAFYLCAEAA), and 359–402 (QGKT…EEVP). SAM domains follow at residues 412 to 476 (WKEA…LKTF) and 486 to 548 (NLAD…MLHS). Phosphoserine occurs at positions 548 and 558. A TIR domain is found at 560–703 (DTPDVFISYR…KIIRFLQGRP (144 aa)). NAD(+) contacts are provided by residues 569–570 (RR) and glutamate 599. Residue glutamate 642 is part of the active site. The segment covering 703-717 (PSQDSSAGSDTSLEG) has biased composition (polar residues). The disordered stretch occupies residues 703 to 724 (PSQDSSAGSDTSLEGATSMGLP).

This sequence belongs to the SARM1 family. Homooctamer; forms an octameric ring via SAM domains. Interacts with TICAM1/TRIF and thereby interferes with TICAM1/TRIF function. Interacts with MAPK10/JNK3 and SDC2 (via cytoplasmic domain). Phosphorylation at Ser-548 by JNK kinases (MAPK8, MAPK9 and /or MAPK10) enhance the NAD(+) hydrolase (NADase) activity. Phosphorylation at Ser-548 and subsequent activation takes place in response to oxidative stress conditions and inhibits mitochondrial respiration. Phosphorylation at Ser-548 increases in response to cerebral ischemia/reperfusion (I/R) injury.

Its subcellular location is the cytoplasm. It is found in the cell projection. It localises to the axon. The protein resides in the dendrite. The protein localises to the synapse. Its subcellular location is the mitochondrion. It carries out the reaction NAD(+) + H2O = ADP-D-ribose + nicotinamide + H(+). It catalyses the reaction NAD(+) = cyclic ADP-beta-D-ribose + nicotinamide + H(+). The catalysed reaction is NADP(+) + H2O = ADP-D-ribose 2'-phosphate + nicotinamide + H(+). With respect to regulation, autoinhibited: in the inactive state, the enzymatic TIR domain is held apart by the autoinhibiting ARM repeats. NAD(+)-binding to ARM repeats maintains an inactive state by promoting interaction between ARM repeats and the TIR domain, thereby facilitating inhibition of the enzymatic TIR domain. Following activation, possibly by nicotinamide mononucleotide (NMN), auto-inhibitory interactions are released, allowing self-association of the TIR domains and subsequent activation of the NAD(+) hydrolase (NADase) activity. Self-association of TIR domains is facilitated by the octamer of SAM domains. NAD(+) hydrolase, which plays a key role in axonal degeneration following injury by regulating NAD(+) metabolism. Acts as a negative regulator of MYD88- and TRIF-dependent toll-like receptor signaling pathway by promoting Wallerian degeneration, an injury-induced form of programmed subcellular death which involves degeneration of an axon distal to the injury site. Wallerian degeneration is triggered by NAD(+) depletion: in response to injury, SARM1 is activated and catalyzes cleavage of NAD(+) into ADP-D-ribose (ADPR), cyclic ADPR (cADPR) and nicotinamide; NAD(+) cleavage promoting cytoskeletal degradation and axon destruction. Also able to hydrolyze NADP(+), but not other NAD(+)-related molecules. Can activate neuronal cell death in response to stress. Regulates dendritic arborization through the MAPK4-JNK pathway. Involved in innate immune response: inhibits both TICAM1/TRIF- and MYD88-dependent activation of JUN/AP-1, TRIF-dependent activation of NF-kappa-B and IRF3, and the phosphorylation of MAPK14/p38. The polypeptide is NAD(+) hydrolase SARM1 (Rattus norvegicus (Rat)).